We begin with the raw amino-acid sequence, 802 residues long: Osmosensitive cation channel TMEM63C (802 aa).

Residues 1–35 (MSAFPDSMDQKFHNMTVNECFQSRSTVLQGQPFGG) lie on the Extracellular side of the membrane. The helical transmembrane segment at 36 to 60 (IPTVLVLNIILWVFVVLLYSFLRKA) threads the bilayer. The Cytoplasmic portion of the chain corresponds to 61 to 124 (AWDYGRLALL…RDRDLINKCG (64 aa)). Phosphoserine is present on residues S75 and S78. The chain crosses the membrane as a helical span at residues 125–157 (DDARIYITFQYHLIIFVLILCIPSLGIILPVNY). The Extracellular segment spans residues 158–180 (IGTVLDWNSHFGRTTIVNVSTES). Residues 181 to 205 (KFLWLHSLFAFLYFLINLAFMGHHC) traverse the membrane as a helical segment. Residues 206–401 (LGFVPKKSLH…IIWKHLSIRR (196 aa)) are Cytoplasmic-facing. Residues 402–431 (FSWWTRFIAINTFLFFLFFFLTTPAIIINT) form a helical membrane-spanning segment. The Extracellular portion of the chain corresponds to 432 to 446 (IDIYNVTRPIEKLQS). The helical transmembrane segment at 447-476 (PIVTQFFPSVLLWAFTVTMPLLVYLSAFLE) threads the bilayer. The Cytoplasmic portion of the chain corresponds to 477–480 (AHWT). The helical transmembrane segment at 481-517 (RSSQNLIIVHKCYIFLVFMVVILPSMGLTSLHVFLRW) threads the bilayer. The Extracellular portion of the chain corresponds to 518-540 (LFDIYYLEHATIRFQCVFLPDNG). Residues 541–573 (AFFINYVITAALLGTGMELMRLGSLCTYCTRLF) traverse the membrane as a helical segment. Residues 574–593 (LSKSEPERVHIRKNQATDFQ) are Cytoplasmic-facing. The chain crosses the membrane as a helical span at residues 594-612 (FGREYAWMLNVFSVVMAYS). Residues 613-615 (ITC) are Extracellular-facing. The chain crosses the membrane as a helical span at residues 616–640 (PIIVPFGLLYLCMKHITDRYNMYYS). The Cytoplasmic portion of the chain corresponds to 641–647 (YAPTKLN). A helical membrane pass occupies residues 648–676 (AQIHMAAVYQAIFAPLLGLFWMLFFSILR). The Extracellular portion of the chain corresponds to 677-681 (VGSLH). Residues 682-702 (SITLFSMSSLIISVVIAFSGV) form a helical membrane-spanning segment. Residues 703 to 802 (FLGKLRIAQR…EGLEMEGQSH (100 aa)) are Cytoplasmic-facing. Residues 753-785 (TPASSPARHTYGTINSQPEEGEEESGLRGFARE) form a disordered region.

It belongs to the CSC1 (TC 1.A.17) family. In terms of assembly, monomer.

It localises to the endoplasmic reticulum membrane. The protein localises to the cell membrane. It catalyses the reaction Ca(2+)(in) = Ca(2+)(out). In terms of biological role, acts as an osmosensitive cation channel preferentially activated upon hypotonic stress. In contrast to TMEM63B, does not show phospholipid scramblase activity. Enriched in mitochondria-ER contact sites where it may regulate the metabolite flux and organelles' morphologies in response to osmotic changes. In particular may regulate mitochondrial motility and function in motor neuron axons. Required for the functional integrity of the kidney glomerular filtration barrier. This chain is Osmosensitive cation channel TMEM63C, found in Mus musculus (Mouse).